A 302-amino-acid polypeptide reads, in one-letter code: Citrate lyase subunit beta (302 aa).

Substrate-binding residues include R76 and E139. E139 and D166 together coordinate Mg(2+).

It belongs to the HpcH/HpaI aldolase family. Citrate lyase beta subunit subfamily. In terms of assembly, oligomer with a subunit composition of (alpha,beta,gamma)6. Requires Mg(2+) as cofactor.

Its subcellular location is the cytoplasm. The enzyme catalyses citrate = oxaloacetate + acetate. The catalysed reaction is (3S)-citryl-CoA = oxaloacetate + acetyl-CoA. Its function is as follows. Represents a citryl-ACP lyase. The polypeptide is Citrate lyase subunit beta (citE) (Escherichia coli O6:H1 (strain CFT073 / ATCC 700928 / UPEC)).